Reading from the N-terminus, the 389-residue chain is Succinate--CoA ligase [ADP-forming] subunit beta (389 aa).

Residues Lys46, 53–55 (GRG), Glu99, Cys102, and Glu107 contribute to the ATP site. Asn199 and Asp213 together coordinate Mg(2+). Residues Asn264 and 321-323 (GIV) contribute to the substrate site.

This sequence belongs to the succinate/malate CoA ligase beta subunit family. In terms of assembly, heterotetramer of two alpha and two beta subunits. The cofactor is Mg(2+).

The catalysed reaction is succinate + ATP + CoA = succinyl-CoA + ADP + phosphate. It carries out the reaction GTP + succinate + CoA = succinyl-CoA + GDP + phosphate. It functions in the pathway carbohydrate metabolism; tricarboxylic acid cycle; succinate from succinyl-CoA (ligase route): step 1/1. In terms of biological role, succinyl-CoA synthetase functions in the citric acid cycle (TCA), coupling the hydrolysis of succinyl-CoA to the synthesis of either ATP or GTP and thus represents the only step of substrate-level phosphorylation in the TCA. The beta subunit provides nucleotide specificity of the enzyme and binds the substrate succinate, while the binding sites for coenzyme A and phosphate are found in the alpha subunit. The sequence is that of Succinate--CoA ligase [ADP-forming] subunit beta from Haemophilus influenzae (strain PittEE).